The sequence spans 535 residues: Dual specificity calcium/calmodulin-dependent 3',5'-cyclic nucleotide phosphodiesterase 1A (535 aa).

Calmodulin-binding regions lie at residues 24 to 44 (TEKM…QLER) and 114 to 137 (EKPK…MYRK). The region spanning 142–522 (VGLAYPAAVI…ERWKELAAQE (381 aa)) is the PDEase domain. Histidine 219 acts as the Proton donor in catalysis. Residues histidine 223, histidine 259, aspartate 260, and aspartate 366 each contribute to the Zn(2+) site. Aspartate 260 lines the Mg(2+) pocket.

Belongs to the cyclic nucleotide phosphodiesterase family. PDE1 subfamily. Homodimer. Interacts with YWHAZ. The cofactor is Zn(2+). Mg(2+) is required as a cofactor. As to expression, several tissues, including brain, kidney, testes and heart.

It catalyses the reaction a nucleoside 3',5'-cyclic phosphate + H2O = a nucleoside 5'-phosphate + H(+). The catalysed reaction is 3',5'-cyclic GMP + H2O = GMP + H(+). It carries out the reaction 3',5'-cyclic AMP + H2O = AMP + H(+). With respect to regulation, type I PDE are activated by the binding of calmodulin in the presence of Ca(2+). In terms of biological role, calcium/calmodulin-dependent cyclic nucleotide phosphodiesterase with a dual specificity for the second messengers cGMP and cAMP, which are key regulators of many important physiological processes. Has a higher efficiency with cGMP compared to cAMP. The sequence is that of Dual specificity calcium/calmodulin-dependent 3',5'-cyclic nucleotide phosphodiesterase 1A from Homo sapiens (Human).